Here is a 311-residue protein sequence, read N- to C-terminus: R2-like ligand binding oxidase (311 aa).

The Mn(2+) site is built by E68, E101, and H104. A cross-link (3-(O4'-tyrosyl)-valine (Val-Tyr)) is located at residues 71 to 162; that stretch reads VTQDIQPFMA…AAQVRASVTY (92 aa). E101 provides a ligand contact to Fe cation. Fe cation is bound by residues E167, E202, and H205.

The protein belongs to the ribonucleoside diphosphate reductase small chain family. R2-like ligand binding oxidase subfamily. In terms of assembly, homodimer. Fe cation serves as cofactor. Mn(2+) is required as a cofactor.

Functionally, probable oxidase that might be involved in lipid metabolism. In Mycolicibacterium paratuberculosis (strain ATCC BAA-968 / K-10) (Mycobacterium paratuberculosis), this protein is R2-like ligand binding oxidase.